We begin with the raw amino-acid sequence, 621 residues long: Putative acyltransferase plsB1 (621 aa).

Residues 123 to 128 (HRSYLD) carry the HXXXXD motif motif.

This sequence belongs to the GPAT/DAPAT family.

The protein localises to the cell membrane. This is Putative acyltransferase plsB1 (plsB1) from Mycobacterium bovis (strain ATCC BAA-935 / AF2122/97).